Here is a 199-residue protein sequence, read N- to C-terminus: Protein-methionine-sulfoxide reductase heme-binding subunit MsrQ (199 aa).

5 helical membrane passes run 10–30 (WLKV…ILSV), 79–99 (LLGL…SVLE), 118–138 (LTLG…STLW), 147–167 (WQKL…HYLW), and 169–189 (VKTL…LLAL).

It belongs to the MsrQ family. As to quaternary structure, heterodimer of a catalytic subunit (MsrP) and a heme-binding subunit (MsrQ). FMN is required as a cofactor. It depends on heme b as a cofactor.

It is found in the cell inner membrane. Its function is as follows. Part of the MsrPQ system that repairs oxidized periplasmic proteins containing methionine sulfoxide residues (Met-O), using respiratory chain electrons. Thus protects these proteins from oxidative-stress damage caused by reactive species of oxygen and chlorine generated by the host defense mechanisms. MsrPQ is essential for the maintenance of envelope integrity under bleach stress, rescuing a wide series of structurally unrelated periplasmic proteins from methionine oxidation. MsrQ provides electrons for reduction to the reductase catalytic subunit MsrP, using the quinone pool of the respiratory chain. This is Protein-methionine-sulfoxide reductase heme-binding subunit MsrQ from Yersinia enterocolitica serotype O:8 / biotype 1B (strain NCTC 13174 / 8081).